Consider the following 590-residue polypeptide: Pentatricopeptide repeat-containing protein At2g46050, mitochondrial (590 aa).

The N-terminal 109 residues, Met1–Ile109, are a transit peptide targeting the mitochondrion. 11 PPR repeats span residues Asp141–Ser175, Ser176–Arg206, Asp207–Phe241, Asp244–Ile266, Asp275–Arg305, Asn306–Pro340, Asp341–Asp375, Phe376–Pro406, Asp407–Lys437, Asp441–Phe471, and Glu477–Glu507. The interval Ala512–Tyr588 is type E motif.

It belongs to the PPR family. PCMP-E subfamily.

The protein localises to the mitochondrion. In Arabidopsis thaliana (Mouse-ear cress), this protein is Pentatricopeptide repeat-containing protein At2g46050, mitochondrial (PCMP-E39).